The sequence spans 342 residues: C-X-C chemokine receptor type 6 (342 aa).

At 1–32 (MAEHDYHEDYGFSSFNDSSQEEHQDFLQFSKV) the chain is on the extracellular side. N-linked (GlcNAc...) asparagine glycosylation is present at Asn16. Residues 33–59 (FLPCMYLVVFVCGLVGNSLVLVISIFY) form a helical membrane-spanning segment. Residues 60–68 (HKLQSLTDV) are Cytoplasmic-facing. A helical transmembrane segment spans residues 69 to 89 (FLVNLPLADLVFVCTLPFWAY). Residues 90-103 (AGIHEWVFGQVMCK) are Extracellular-facing. Cys102 and Cys180 are joined by a disulfide. The chain crosses the membrane as a helical span at residues 104–125 (SLLGIYTINFYTSMLILTCITV). Topologically, residues 126 to 143 (DRFIVVVKATKAYNQQAK) are cytoplasmic. A helical transmembrane segment spans residues 144-164 (RMTWGKVTSLLIWVISLLVSL). Residues 165–187 (PQIIYGNVFNLDKLICGYHDEAI) lie on the Extracellular side of the membrane. A helical transmembrane segment spans residues 188 to 215 (STVVLATQMTLGFFLPLLTMIVCYSVII). At 216-231 (KTLLHAGGFQKHRSLK) the chain is on the cytoplasmic side. A helical membrane pass occupies residues 232-259 (IIFLVMAVFLLTQMPFNLMKFIRSTHWE). Over 260 to 275 (YYAMTSFHYTIMVTEA) the chain is Extracellular. The helical transmembrane segment at 276-293 (IAYLRACLNPVLYAFVSL) threads the bilayer. The Cytoplasmic portion of the chain corresponds to 294–342 (KFRKNFWKLVKDIGCLPYLGVSHQWKSSEDNSKTFSASHNVEATSMFQL).

The protein belongs to the G-protein coupled receptor 1 family. In terms of tissue distribution, expressed in lymphoid tissues and activated T cells.

Its subcellular location is the cell membrane. Receptor for the C-X-C chemokine CXCL16. Used as a coreceptor by SIVs and by strains of HIV-2 and m-tropic HIV-1. The sequence is that of C-X-C chemokine receptor type 6 (CXCR6) from Homo sapiens (Human).